Here is a 445-residue protein sequence, read N- to C-terminus: Tubby-like F-box protein 10 (445 aa).

One can recognise an F-box domain in the interval Ser-57–Gly-112. Over residues Pro-382 to Ala-398 the composition is skewed to low complexity. Residues Pro-382–Glu-401 form a disordered region.

Belongs to the TUB family. In terms of assembly, part of a SCF (ASK-cullin-F-box) protein ligase complex. Interacts with SKP1A/ASK1. As to expression, ubiquitous.

Its subcellular location is the nucleus. It participates in protein modification; protein ubiquitination. In terms of biological role, component of SCF(ASK-cullin-F-box) E3 ubiquitin ligase complexes, which may mediate the ubiquitination and subsequent proteasomal degradation of target proteins. The chain is Tubby-like F-box protein 10 from Arabidopsis thaliana (Mouse-ear cress).